The following is a 410-amino-acid chain: Transcription factor PHYTOCHROME INTERACTING FACTOR-LIKE 13 (410 aa).

Residues 82–92 (AAAAAGPSSHH) show a composition bias toward low complexity. 2 disordered regions span residues 82–110 (AAAA…MRSG) and 137–225 (CRDA…AEVH). Residues 93 to 104 (APPPDLPPPAAR) are compositionally biased toward pro residues. Basic and acidic residues predominate over residues 187 to 197 (GREDSDSRSED). Basic residues predominate over residues 209–219 (SSRRYGSKRRT). Residues 220–233 (RAAEVHNLSERRRR) are basic motif. In terms of domain architecture, bHLH spans 220 to 269 (RAAEVHNLSERRRRDRINEKMRALQELIPHCNKTDKASILDEAIEYLKSL). Residues 234–269 (DRINEKMRALQELIPHCNKTDKASILDEAIEYLKSL) are helix-loop-helix motif. The segment at 357-410 (PFLHPDGWQTVPPQVSGPYASGPQVAQQNQIPKASASTVLPNSGAEQPPTSDGI) is disordered. Residues 380-410 (QVAQQNQIPKASASTVLPNSGAEQPPTSDGI) are compositionally biased toward polar residues.

The protein belongs to the bHLH protein family. As to quaternary structure, interacts with PRR1. Interacts with LF. As to expression, highly expressed in the node portions of the stem. Expressed in the leaves and the basal part of shoots.

The protein resides in the nucleus. Its function is as follows. Transcription factor that may act as negative regulator of phyB-dependent light signal transduction. Transcription activator that acts as a positive regulator of internode elongation. May function via regulation of cell wall-related genes. May play a role in a drought-associated growth-restriction mechanism in response to drought stress. The polypeptide is Transcription factor PHYTOCHROME INTERACTING FACTOR-LIKE 13 (Oryza sativa subsp. japonica (Rice)).